The primary structure comprises 216 residues: Ras-related protein RABA1a (216 aa).

20–27 provides a ligand contact to GTP; that stretch reads GDSGVGKS. An Effector region motif is present at residues 42-50; sequence SKSTIGVEF. GTP contacts are provided by residues 68–72, 126–129, and 156–157; these read DTAGQ, NKCD, and SA. Residues Cys213 and Cys214 are each lipidated (S-geranylgeranyl cysteine).

It belongs to the small GTPase superfamily. Rab family.

The protein localises to the cell membrane. Involved in auxin-mediated response. May be involved in vesicle trafficking of components involved in polar auxin transport. Binds GTP and GDP and possesses intrinsic GTPase activity. The protein is Ras-related protein RABA1a (RABA1A) of Arabidopsis thaliana (Mouse-ear cress).